The following is a 102-amino-acid chain: P antigen family member 4 (102 aa).

Positions 1 to 10 are enriched in basic residues; that stretch reads MSARVRSRSR. Positions 1-102 are disordered; sequence MSARVRSRSR…KTKEAGDGQP (102 aa). Serine 7 is modified (phosphoserine; by CLK2). A Phosphoserine; by HIPK1 and CLK2 modification is found at serine 9. Residues 45 to 85 show a composition bias toward basic and acidic residues; the sequence is GQEREGTPPIEERKVEGDCQEMDLEKTRSERGDGSDVKEKT. Position 51 is a phosphothreonine; by HIPK1 and CLK2 (threonine 51). Phosphothreonine; by CLK2 is present on threonine 71. Serine 73 and serine 79 each carry phosphoserine; by CLK2. 2 positions are modified to phosphothreonine; by CLK2: threonine 85 and threonine 94.

It belongs to the GAGE family. As to quaternary structure, interacts with JUN. In terms of processing, HIPK1-mediated phosphorylation at Thr-51 leads to the compaction of its intrinsically disordered conformation and is critical for its ability to potentiate the transcriptional activator activity of JUN inspite of a reduced interaction with JUN. CLK2-mediated phosphorylation at multiple Ser and Thr residues attenuates its ability to potentiate JUN transcriptional activator activity. As to expression, expressed at basal lvels in the adult normal prostate gland but is highly up-regulated in the fetal prostate and prostate cancer cells. Preferentially expressed in normal male and female reproductive tissues, testis, fallopian tube, uterus, and placenta, as well as in testicular cancer, uterine cancer, cervical cancer and kidney cancer.

The protein localises to the cytoplasm. The protein resides in the nucleus. It is found in the mitochondrion. Functionally, intrinsically disordered protein that potentiates the transcriptional activator activity of JUN. Protects cells from stress-induced apoptosis by inhibiting reactive oxygen species (ROS) production and via regulation of the MAPK signaling pathway. This is P antigen family member 4 (PAGE4) from Homo sapiens (Human).